The sequence spans 392 residues: Formate-dependent phosphoribosylglycinamide formyltransferase (392 aa).

N(1)-(5-phospho-beta-D-ribosyl)glycinamide-binding positions include 20-21 (EL) and Glu80. ATP-binding positions include Arg112, Lys153, 158–163 (SSGKGQ), 193–196 (EGFV), and Glu201. Residues 117–306 (RLAAEELGLP…EFALHVRAIL (190 aa)) enclose the ATP-grasp domain. Positions 265 and 277 each coordinate Mg(2+). Residues Asp284, Lys355, and 362-363 (RR) each bind N(1)-(5-phospho-beta-D-ribosyl)glycinamide.

It belongs to the PurK/PurT family. In terms of assembly, homodimer.

The enzyme catalyses N(1)-(5-phospho-beta-D-ribosyl)glycinamide + formate + ATP = N(2)-formyl-N(1)-(5-phospho-beta-D-ribosyl)glycinamide + ADP + phosphate + H(+). Its pathway is purine metabolism; IMP biosynthesis via de novo pathway; N(2)-formyl-N(1)-(5-phospho-D-ribosyl)glycinamide from N(1)-(5-phospho-D-ribosyl)glycinamide (formate route): step 1/1. Its function is as follows. Involved in the de novo purine biosynthesis. Catalyzes the transfer of formate to 5-phospho-ribosyl-glycinamide (GAR), producing 5-phospho-ribosyl-N-formylglycinamide (FGAR). Formate is provided by PurU via hydrolysis of 10-formyl-tetrahydrofolate. The polypeptide is Formate-dependent phosphoribosylglycinamide formyltransferase (Aeromonas salmonicida (strain A449)).